The sequence spans 364 residues: Glycosyltransferase 8 domain-containing protein 1 (364 aa).

At 1-5 (MRRVH) the chain is on the cytoplasmic side. Residues 6 to 26 (ITVILLAAVIFLLVLHHNILG) form a helical; Signal-anchor for type II membrane protein membrane-spanning segment. Residues 27 to 364 (LSDILKRQNS…QFSLIRRHAE (338 aa)) are Lumenal-facing. N-linked (GlcNAc...) asparagine glycans are attached at residues asparagine 102, asparagine 247, and asparagine 255.

The protein belongs to the glycosyltransferase 8 family.

It is found in the membrane. The chain is Glycosyltransferase 8 domain-containing protein 1 (glt8d1) from Xenopus laevis (African clawed frog).